Reading from the N-terminus, the 334-residue chain is Glycerol-3-phosphate dehydrogenase [NAD(P)+] (334 aa).

Residues Trp14, Arg34, and Lys107 each contribute to the NADPH site. Sn-glycerol 3-phosphate-binding residues include Lys107 and Gly135. Position 139 (Ala139) interacts with NADPH. Sn-glycerol 3-phosphate-binding residues include Lys190, Asp243, Ser253, Arg254, and Asn255. Lys190 serves as the catalytic Proton acceptor. Residue Arg254 participates in NADPH binding. Residues Val272 and Glu273 each coordinate NADPH.

This sequence belongs to the NAD-dependent glycerol-3-phosphate dehydrogenase family.

It localises to the cytoplasm. It catalyses the reaction sn-glycerol 3-phosphate + NAD(+) = dihydroxyacetone phosphate + NADH + H(+). It carries out the reaction sn-glycerol 3-phosphate + NADP(+) = dihydroxyacetone phosphate + NADPH + H(+). The protein operates within membrane lipid metabolism; glycerophospholipid metabolism. In terms of biological role, catalyzes the reduction of the glycolytic intermediate dihydroxyacetone phosphate (DHAP) to sn-glycerol 3-phosphate (G3P), the key precursor for phospholipid synthesis. This Neorickettsia sennetsu (strain ATCC VR-367 / Miyayama) (Ehrlichia sennetsu) protein is Glycerol-3-phosphate dehydrogenase [NAD(P)+].